A 166-amino-acid chain; its full sequence is Lipoprotein signal peptidase (166 aa).

3 consecutive transmembrane segments (helical) span residues 12–32 (WLWLVVVVLIIDLGSKFLILQ), 70–90 (WFFAGIALGICLVLTVMMYRA), and 102–122 (ALIIGGALGNLFDRLWHGFVV). Active-site residues include D123 and D141. The chain crosses the membrane as a helical span at residues 142–162 (SAICFGAAMIVLEGFLPNAAA).

The protein belongs to the peptidase A8 family.

It localises to the cell inner membrane. It catalyses the reaction Release of signal peptides from bacterial membrane prolipoproteins. Hydrolyzes -Xaa-Yaa-Zaa-|-(S,diacylglyceryl)Cys-, in which Xaa is hydrophobic (preferably Leu), and Yaa (Ala or Ser) and Zaa (Gly or Ala) have small, neutral side chains.. Its pathway is protein modification; lipoprotein biosynthesis (signal peptide cleavage). Functionally, this protein specifically catalyzes the removal of signal peptides from prolipoproteins. This chain is Lipoprotein signal peptidase, found in Enterobacter sp. (strain 638).